The following is a 153-amino-acid chain: Histone H2B.4 (153 aa).

Basic and acidic residues-rich tracts occupy residues 1-10 and 20-54; these read MAPKKDEKPA and AKAEAKPKAEKAAKKAKKEPSKKAAKEPKGDGEKK. Residues 1–60 form a disordered region; it reads MAPKKDEKPATAEAGAEAPAKAEAKPKAEKAAKKAKKEPSKKAAKEPKGDGEKKDKKKKK. N6-acetyllysine occurs at positions 41 and 42. A Glycyl lysine isopeptide (Lys-Gly) (interchain with G-Cter in ubiquitin) cross-link involves residue lysine 149.

Belongs to the histone H2B family. In terms of assembly, the nucleosome is a histone octamer containing two molecules each of H2A, H2B, H3 and H4 assembled in one H3-H4 heterotetramer and two H2A-H2B heterodimers. The octamer wraps approximately 147 bp of DNA. In terms of processing, the N-terminus is blocked. Post-translationally, can be acetylated to form H2BK33ac and H2BK34ac. Acetylated mainly on the ubiquitinated form. Monoubiquitinated to form H2BK143ub1; which is increased during the light period and may give a specific tag for epigenetic transcriptional activation.

It is found in the nucleus. The protein resides in the chromosome. Core component of nucleosome. Nucleosomes wrap and compact DNA into chromatin, limiting DNA accessibility to the cellular machineries which require DNA as a template. Histones thereby play a central role in transcription regulation, DNA repair, DNA replication and chromosomal stability. DNA accessibility is regulated via a complex set of post-translational modifications of histones, also called histone code, and nucleosome remodeling. This is Histone H2B.4 from Chlamydomonas reinhardtii (Chlamydomonas smithii).